The following is a 376-amino-acid chain: Natterin-2 (376 aa).

The first 18 residues, 1 to 18, serve as a signal peptide directing secretion; that stretch reads MNLSVLLVTLLLLSWTSA. Residues 19–27 constitute a propeptide that is removed on maturation; the sequence is EKDLKVRVA.

Belongs to the natterin family. Contains 4 disulfide bonds. In terms of tissue distribution, expressed by the venom gland.

The protein resides in the secreted. With respect to regulation, inhibited by tissue-kallikrein inhibitor TKI and trasylol. Plasma kallikrein inhibitor PKSI527 and classical inhibitors of serine-, metallo-, thiol- or aspartate-peptidases evokes a minor inhibition of the peptide digestion. Shows nociceptive, edema-inducing and kininogenase activity with release of kallidin from low molecular weight kininogen. The cleavage occurs at Met-Lys bonds. This is Natterin-2 from Thalassophryne nattereri (Copper Joe toadfish).